The following is a 422-amino-acid chain: Ribosomal RNA small subunit methyltransferase B (422 aa).

S-adenosyl-L-methionine is bound by residues 254 to 260, Asp-277, Asp-303, and Asp-322; that span reads CAAPGGK. The Nucleophile role is filled by Cys-375.

The protein belongs to the class I-like SAM-binding methyltransferase superfamily. RsmB/NOP family.

The protein resides in the cytoplasm. The enzyme catalyses cytidine(967) in 16S rRNA + S-adenosyl-L-methionine = 5-methylcytidine(967) in 16S rRNA + S-adenosyl-L-homocysteine + H(+). Functionally, specifically methylates the cytosine at position 967 (m5C967) of 16S rRNA. This Proteus mirabilis (strain HI4320) protein is Ribosomal RNA small subunit methyltransferase B.